The sequence spans 448 residues: Phosphoglucosamine mutase (448 aa).

Serine 104 (phosphoserine intermediate) is an active-site residue. Mg(2+) is bound by residues serine 104, aspartate 245, aspartate 247, and aspartate 249. Serine 104 carries the phosphoserine modification.

Belongs to the phosphohexose mutase family. It depends on Mg(2+) as a cofactor. Activated by phosphorylation.

It carries out the reaction alpha-D-glucosamine 1-phosphate = D-glucosamine 6-phosphate. In terms of biological role, catalyzes the conversion of glucosamine-6-phosphate to glucosamine-1-phosphate. In Caulobacter vibrioides (strain ATCC 19089 / CIP 103742 / CB 15) (Caulobacter crescentus), this protein is Phosphoglucosamine mutase.